A 481-amino-acid chain; its full sequence is RAC-beta serine/threonine-protein kinase (481 aa).

M1 bears the N-acetylmethionine mark. The 104-residue stretch at 5 to 108 folds into the PH domain; that stretch reads SVIKEGWLHK…WMRAIQMVAN (104 aa). Position 34 is a phosphoserine (S34). Residues C60 and C77 are joined by a disulfide bond. S126 carries the phosphoserine modification. Residues S128 and S131 are each glycosylated (O-linked (GlcNAc) serine). In terms of domain architecture, Protein kinase spans 152-409; the sequence is FDYLKLLGKG…AKEVMEHRFF (258 aa). Residues 158–166 and K181 each bind ATP; that span reads LGKGTFGKV. The active-site Proton acceptor is the D275. Residues N280 and D293 each contribute to the Mn(2+) site. C297 and C311 are joined by a disulfide. T306 is a glycosylation site (O-linked (GlcNAc) threonine). Position 309 is a phosphothreonine; by PDPK1 (T309). O-linked (GlcNAc) threonine glycosylation occurs at T313. In terms of domain architecture, AGC-kinase C-terminal spans 410-481; the sequence is LSINWQDVVQ…QFSYSASIRE (72 aa). S447 bears the Phosphoserine mark. T451 carries the phosphothreonine modification. S474 and S478 each carry phosphoserine; by MTOR. An O-linked (GlcNAc) serine; alternate glycan is attached at S474.

The protein belongs to the protein kinase superfamily. AGC Ser/Thr protein kinase family. RAC subfamily. In terms of assembly, interacts with BTBD10. Interacts with KCTD20. Interacts (via PH domain) with MTCP1, TCL1A and TCL1B; this interaction may facilitate AKT2 oligomerization and phosphorylation, hence increasing kinase activity. Interacts with PHB2; this interaction may be important for myogenic differentiation. Interacts (when phosphorylated) with CLIP3/ClipR-59; this interaction promotes cell membrane localization. Interacts with WDFY2 (via WD repeats 1-3). Phosphorylation on Thr-309 and Ser-474 is required for full activity. Phosphorylation of the activation loop at Thr-309 by PDPK1/PDK1 is a prerequisite for full activation. Phosphorylated and activated by PDPK1/PDK1 in the presence of phosphatidylinositol 3,4,5-trisphosphate. Phosphorylation by mTORC2 in response to growth factors plays a key role in AKT1 activation: mTORC2 phosphorylates different sites depending on the context, such as Ser-474 or Ser-478, thereby facilitating subsequent phosphorylation of the activation loop by PDPK1/PDK1. In terms of processing, ubiquitinated; undergoes both 'Lys-48'- and 'Lys-63'-linked polyubiquitination. TRAF6-induced 'Lys-63'-linked AKT2 ubiquitination. When fully phosphorylated and translocated into the nucleus, undergoes 'Lys-48'-polyubiquitination catalyzed by TTC3, leading to its degradation by the proteasome. Post-translationally, O-GlcNAcylation at Thr-306 and Thr-313 inhibits activating phosphorylation at Thr-309 via disrupting the interaction between AKT and PDPK1/PDK1.

It localises to the cytoplasm. It is found in the nucleus. The protein localises to the cell membrane. Its subcellular location is the early endosome. The catalysed reaction is L-seryl-[protein] + ATP = O-phospho-L-seryl-[protein] + ADP + H(+). The enzyme catalyses L-threonyl-[protein] + ATP = O-phospho-L-threonyl-[protein] + ADP + H(+). Its activity is regulated as follows. Two specific sites, one in the kinase domain (Thr-309) and the other in the C-terminal regulatory region (Ser-474), need to be phosphorylated for its full activation. AKT2 phosphorylation of PKP1 is induced by insulin. Inhibited by Akt inhibitor MK2206. Its function is as follows. AKT2 is one of 3 closely related serine/threonine-protein kinases (AKT1, AKT2 and AKT3) called the AKT kinases, and which regulate many processes including metabolism, proliferation, cell survival, growth and angiogenesis. This is mediated through serine and/or threonine phosphorylation of a range of downstream substrates. Over 100 substrate candidates have been reported so far, but for most of them, no isoform specificity has been reported. AKT is responsible of the regulation of glucose uptake by mediating insulin-induced translocation of the SLC2A4/GLUT4 glucose transporter to the cell surface. Phosphorylation of PTPN1 at 'Ser-50' negatively modulates its phosphatase activity preventing dephosphorylation of the insulin receptor and the attenuation of insulin signaling. Phosphorylation of TBC1D4 triggers the binding of this effector to inhibitory 14-3-3 proteins, which is required for insulin-stimulated glucose transport. AKT also regulates the storage of glucose in the form of glycogen by phosphorylating GSK3A at 'Ser-21' and GSK3B at 'Ser-9', resulting in inhibition of its kinase activity. Phosphorylation of GSK3 isoforms by AKT is also thought to be one mechanism by which cell proliferation is driven. AKT also regulates cell survival via the phosphorylation of MAP3K5 (apoptosis signal-related kinase). Phosphorylation of 'Ser-83' decreases MAP3K5 kinase activity stimulated by oxidative stress and thereby prevents apoptosis. AKT mediates insulin-stimulated protein synthesis by phosphorylating TSC2 at 'Ser-939' and 'Thr-1462', thereby activating mTORC1 signaling and leading to both phosphorylation of 4E-BP1 and in activation of RPS6KB1. AKT is involved in the phosphorylation of members of the FOXO factors (Forkhead family of transcription factors), leading to binding of 14-3-3 proteins and cytoplasmic localization. In particular, FOXO1 is phosphorylated at 'Thr-24', 'Ser-256' and 'Ser-319'. FOXO3 and FOXO4 are phosphorylated on equivalent sites. AKT has an important role in the regulation of NF-kappa-B-dependent gene transcription and positively regulates the activity of CREB1 (cyclic AMP (cAMP)-response element binding protein). The phosphorylation of CREB1 induces the binding of accessory proteins that are necessary for the transcription of pro-survival genes such as BCL2 and MCL1. AKT phosphorylates 'Ser-454' on ATP citrate lyase (ACLY), thereby potentially regulating ACLY activity and fatty acid synthesis. Activates the 3B isoform of cyclic nucleotide phosphodiesterase (PDE3B) via phosphorylation of 'Ser-273', resulting in reduced cyclic AMP levels and inhibition of lipolysis. Phosphorylates PIKFYVE on 'Ser-318', which results in increased PI(3)P-5 activity. The Rho GTPase-activating protein DLC1 is another substrate and its phosphorylation is implicated in the regulation cell proliferation and cell growth. AKT plays a role as key modulator of the AKT-mTOR signaling pathway controlling the tempo of the process of newborn neurons integration during adult neurogenesis, including correct neuron positioning, dendritic development and synapse formation. Signals downstream of phosphatidylinositol 3-kinase (PI(3)K) to mediate the effects of various growth factors such as platelet-derived growth factor (PDGF), epidermal growth factor (EGF), insulin and insulin-like growth factor I (IGF-I). AKT mediates the antiapoptotic effects of IGF-I. Essential for the SPATA13-mediated regulation of cell migration and adhesion assembly and disassembly. May be involved in the regulation of the placental development. In response to lysophosphatidic acid stimulation, inhibits the ciliogenesis cascade. In this context, phosphorylates WDR44, hence stabilizing its interaction with Rab11 and preventing the formation of the ciliogenic Rab11-FIP3-RAB3IP complex. Also phosphorylates RAB3IP/Rabin8, thus may affect RAB3IP guanine nucleotide exchange factor (GEF) activity toward Rab8, which is important for cilia growth. Phosphorylates PKP1, facilitating its interaction with YWHAG and translocation to the nucleus, ultimately resulting in a reduction in keratinocyte intercellular adhesion. Phosphorylation of PKP1 increases PKP1 protein stability, translocation to the cytoplasm away from desmosome plaques and PKP1-driven cap-dependent translation. Functionally, several AKT2-specific substrates have been identified, including ANKRD2, C2CD5, CLK2 and PITX2. May play a role in myoblast differentiation. In this context, may act through PITX2 phosphorylation. Unphosphorylated PITX2 associates with an ELAVL1/HuR-containing complex, which stabilizes cyclin mRNA and ensuring cell proliferation. Phosphorylation by AKT2 impairs this association, leading to CCND1 mRNA destabilization and progression towards differentiation. Also involved in the negative regulation of myogenesis in response to stress conditions. In this context, acts by phosphorylating ANKRD2. May also be a key regulator of glucose uptake. Regulates insulin-stimulated glucose transport by the increase of glucose transporter GLUT4 translocation from intracellular stores to the plasma membrane. In this context, acts by phosphorylating C2CD5/CDP138 on 'Ser-197' in insulin-stimulated adipocytes. Through the phosphorylation of CLK2 on 'Thr-343', involved in insulin-regulated suppression of hepatic gluconeogenesis. The sequence is that of RAC-beta serine/threonine-protein kinase (Akt2) from Mus musculus (Mouse).